Consider the following 272-residue polypeptide: Shikimate dehydrogenase (NADP(+)) (272 aa).

Shikimate-binding positions include 14–16 (SKS) and Thr61. Lys65 functions as the Proton acceptor in the catalytic mechanism. Glu77 serves as a coordination point for NADP(+). Shikimate contacts are provided by Asn86 and Asp102. NADP(+) contacts are provided by residues 126 to 130 (GAGGA), 149 to 154 (NRTFSR), and Met213. A shikimate-binding site is contributed by Tyr215. Gly237 is a binding site for NADP(+).

This sequence belongs to the shikimate dehydrogenase family. Homodimer.

The enzyme catalyses shikimate + NADP(+) = 3-dehydroshikimate + NADPH + H(+). It participates in metabolic intermediate biosynthesis; chorismate biosynthesis; chorismate from D-erythrose 4-phosphate and phosphoenolpyruvate: step 4/7. Functionally, involved in the biosynthesis of the chorismate, which leads to the biosynthesis of aromatic amino acids. Catalyzes the reversible NADPH linked reduction of 3-dehydroshikimate (DHSA) to yield shikimate (SA). This chain is Shikimate dehydrogenase (NADP(+)), found in Photorhabdus laumondii subsp. laumondii (strain DSM 15139 / CIP 105565 / TT01) (Photorhabdus luminescens subsp. laumondii).